The chain runs to 408 residues: Imidazolonepropionase (408 aa).

Residues His72 and His74 each coordinate Fe(3+). The Zn(2+) site is built by His72 and His74. Residues Arg81, Tyr144, and His177 each contribute to the 4-imidazolone-5-propanoate site. Tyr144 is a binding site for N-formimidoyl-L-glutamate. Fe(3+) is bound at residue His242. His242 lines the Zn(2+) pocket. Gln245 serves as a coordination point for 4-imidazolone-5-propanoate. Asp317 contacts Fe(3+). Asp317 serves as a coordination point for Zn(2+). Residues Asn319 and Gly321 each coordinate N-formimidoyl-L-glutamate. Position 322 (Thr322) interacts with 4-imidazolone-5-propanoate.

Belongs to the metallo-dependent hydrolases superfamily. HutI family. Zn(2+) is required as a cofactor. It depends on Fe(3+) as a cofactor.

The protein resides in the cytoplasm. The catalysed reaction is 4-imidazolone-5-propanoate + H2O = N-formimidoyl-L-glutamate. The protein operates within amino-acid degradation; L-histidine degradation into L-glutamate; N-formimidoyl-L-glutamate from L-histidine: step 3/3. Functionally, catalyzes the hydrolytic cleavage of the carbon-nitrogen bond in imidazolone-5-propanoate to yield N-formimidoyl-L-glutamate. It is the third step in the universal histidine degradation pathway. The chain is Imidazolonepropionase from Aliivibrio fischeri (strain MJ11) (Vibrio fischeri).